Consider the following 481-residue polypeptide: MKGRAHIWVALLLACLPPRFRNLDKDVSSPVCRTDDVYTGDAFYPFKKKKYVLYDVHIGEGFNLQKEVLYRVALAVYYLNQEERTHVHYLVLPPWCYVTHWGRERTNARIKWSIFFNLKALQNVIPVMEYAEYEGQFGPHTDYILSYRHIIGEWPKRGDKKSFQVLKLDKCQVKGYKLKKNLRKNCDHKYSVEYSGKCTNVKGKKMECLEFFFITSHFVSSTLLDIFQYDADSVLIKHGSNILVAFMNELVDANLEDVLPYSEDLINEGDQFVEKNFKSSKNYISCHLRYTDFRKISTYDVSPVGISLLKLLYIMFLRKSTLIFVSTDEKKEVKKVIDSQFPQFKHFFFFYENEKLHTGQVAIVDQWICARSGTFVGNIFSRFSMHIKWERSLIGKGGPDHNLDLCGYSISTNHELRKKYSDVQDAHLDEEALQKLRPLYMRLSQKDRDFLRTICYDFAHYYPQNVSIYRRGERREEGRLM.

The N-terminal stretch at 1-22 (MKGRAHIWVALLLACLPPRFRN) is a signal peptide. Residues 59 to 63 (GEGFN), 287 to 289 (HLR), Asp-365, and 382 to 383 (RF) each bind GDP-beta-L-fucose. Glu-60 (proton acceptor) is an active-site residue.

The protein belongs to the glycosyltransferase 68 family.

Its subcellular location is the endoplasmic reticulum. It carries out the reaction L-seryl-[protein] + GDP-beta-L-fucose = 3-O-(alpha-L-fucosyl)-L-seryl-[protein] + GDP + H(+). The catalysed reaction is L-threonyl-[protein] + GDP-beta-L-fucose = 3-O-(alpha-L-fucosyl)-L-threonyl-[protein] + GDP + H(+). The protein operates within protein modification; protein glycosylation. Functionally, catalyzes the reaction that attaches fucose through an O-glycosidic linkage to a conserved serine or threonine residue in the consensus sequence C1-X-X-S/T-C2 of thrombospondin type I repeats (TSRs) where C1 and C2 are the first and second cysteines of the repeat, respectively. O-fucosylates sporozoite proteins CSP and TRAP. O-fucosylation regulates stability and intracellular trafficking of TRAP but not of CSP. Probably by regulating protein O-fucosylation, may play a role in parasite transmission to the mosquito vector and/or infection of the vertebrate host hepatocytes; however, POFUT2 involvement in transmission/infection is controversial. In Plasmodium vivax (strain Salvador I), this protein is GDP-fucose protein O-fucosyltransferase 2.